The sequence spans 356 residues: Dual-specificity RNA methyltransferase RlmN (356 aa).

Glu95 functions as the Proton acceptor in the catalytic mechanism. One can recognise a Radical SAM core domain in the interval Glu101–Glu332. Cys108 and Cys338 are oxidised to a cystine. Residues Cys115, Cys119, and Cys122 each contribute to the [4Fe-4S] cluster site. Residues Gly165–Glu166, Ser197, Ser219–His221, and Asn295 each bind S-adenosyl-L-methionine. The active-site S-methylcysteine intermediate is the Cys338.

Belongs to the radical SAM superfamily. RlmN family. Requires [4Fe-4S] cluster as cofactor.

Its subcellular location is the cytoplasm. It carries out the reaction adenosine(2503) in 23S rRNA + 2 reduced [2Fe-2S]-[ferredoxin] + 2 S-adenosyl-L-methionine = 2-methyladenosine(2503) in 23S rRNA + 5'-deoxyadenosine + L-methionine + 2 oxidized [2Fe-2S]-[ferredoxin] + S-adenosyl-L-homocysteine. It catalyses the reaction adenosine(37) in tRNA + 2 reduced [2Fe-2S]-[ferredoxin] + 2 S-adenosyl-L-methionine = 2-methyladenosine(37) in tRNA + 5'-deoxyadenosine + L-methionine + 2 oxidized [2Fe-2S]-[ferredoxin] + S-adenosyl-L-homocysteine. Specifically methylates position 2 of adenine 2503 in 23S rRNA and position 2 of adenine 37 in tRNAs. m2A2503 modification seems to play a crucial role in the proofreading step occurring at the peptidyl transferase center and thus would serve to optimize ribosomal fidelity. The sequence is that of Dual-specificity RNA methyltransferase RlmN from Magnetococcus marinus (strain ATCC BAA-1437 / JCM 17883 / MC-1).